The primary structure comprises 355 residues: 3-dehydroquinate synthase (355 aa).

Residues 105-109, 129-130, Lys-142, Lys-151, and 169-172 contribute to the NAD(+) site; these read GVVGD, TS, and TLKT. 3 residues coordinate Zn(2+): Glu-184, His-246, and His-263.

It belongs to the sugar phosphate cyclases superfamily. Dehydroquinate synthase family. Requires NAD(+) as cofactor. Co(2+) serves as cofactor. Zn(2+) is required as a cofactor.

It is found in the cytoplasm. It carries out the reaction 7-phospho-2-dehydro-3-deoxy-D-arabino-heptonate = 3-dehydroquinate + phosphate. It functions in the pathway metabolic intermediate biosynthesis; chorismate biosynthesis; chorismate from D-erythrose 4-phosphate and phosphoenolpyruvate: step 2/7. Functionally, catalyzes the conversion of 3-deoxy-D-arabino-heptulosonate 7-phosphate (DAHP) to dehydroquinate (DHQ). This chain is 3-dehydroquinate synthase, found in Streptococcus agalactiae serotype III (strain NEM316).